Reading from the N-terminus, the 300-residue chain is Porphobilinogen deaminase (300 aa).

S-(dipyrrolylmethanemethyl)cysteine is present on Cys-241.

Belongs to the HMBS family. Monomer. The cofactor is dipyrromethane.

The catalysed reaction is 4 porphobilinogen + H2O = hydroxymethylbilane + 4 NH4(+). The protein operates within porphyrin-containing compound metabolism; protoporphyrin-IX biosynthesis; coproporphyrinogen-III from 5-aminolevulinate: step 2/4. In terms of biological role, tetrapolymerization of the monopyrrole PBG into the hydroxymethylbilane pre-uroporphyrinogen in several discrete steps. The protein is Porphobilinogen deaminase of Sorangium cellulosum (strain So ce56) (Polyangium cellulosum (strain So ce56)).